We begin with the raw amino-acid sequence, 677 residues long: Sulfate transporter 2.2 (677 aa).

The Cytoplasmic portion of the chain corresponds to 1 to 110; sequence MQLSSLSHTS…QYKLNLFKKD (110 aa). A helical transmembrane segment spans residues 111–131; it reads LMAGLTLASLCIPQSIGYANL. At 132–133 the chain is on the extracellular side; the sequence is AG. The chain crosses the membrane as a helical span at residues 134–154; the sequence is LDPEYGLYTSVVPPLIYSTMG. Over 155-158 the chain is Cytoplasmic; it reads TSRE. A helical transmembrane segment spans residues 159 to 179; it reads LAIGPVAVVSLLLSSMVRDLQ. Residues 180–190 lie on the Extracellular side of the membrane; that stretch reads DPVTDPIAYRK. The helical transmembrane segment at 191–211 threads the bilayer; sequence IVFTVTFFAGAFQAIFGLFRL. The Cytoplasmic portion of the chain corresponds to 212–213; that stretch reads GF. Residues 214–234 traverse the membrane as a helical segment; the sequence is LVDFLSHAALVGFMAGAAIVI. Over 235-270 the chain is Extracellular; the sequence is GLQQLKGLFGLTHFTNKTDVVSVLSSVFHSLHHPWQ. N250 carries an N-linked (GlcNAc...) asparagine glycan. A helical transmembrane segment spans residues 271–291; it reads PLNFVIGSSFLIFILLARFIG. Topologically, residues 292–296 are cytoplasmic; that stretch reads KRNNK. Residues 297–317 traverse the membrane as a helical segment; the sequence is LFWIPAMAPLISVVLATLIVY. The Extracellular portion of the chain corresponds to 318-352; sequence LSNAESRGVKIVKHIKPGFNQLSVNQLQFKSPHLG. Residues 353 to 373 traverse the membrane as a helical segment; the sequence is QIAKIGLISAIIALTEAIAVG. The Cytoplasmic segment spans residues 374–389; that stretch reads RSFATIKGYRLDGNKE. Residues 390 to 410 traverse the membrane as a helical segment; that stretch reads MMAMGFMNIAGSLSSCYVATG. The Extracellular portion of the chain corresponds to 411–422; that stretch reads SFSRTAVNFSAG. A glycan (N-linked (GlcNAc...) asparagine) is linked at N418. A helical membrane pass occupies residues 423–443; that stretch reads CETVVSNIVMAITVMISLEVL. Residues 444-446 are Cytoplasmic-facing; the sequence is TRF. The helical transmembrane segment at 447-467 threads the bilayer; that stretch reads LYFTPTAILASIILSALPGLI. The Extracellular segment spans residues 468-482; it reads DVSGALHIWKLDKLD. Residues 483 to 503 traverse the membrane as a helical segment; sequence FLVLIAAFFGVLFASVEIGLL. Topologically, residues 504-677 are cytoplasmic; the sequence is LAVGISFARI…RARSTSHELC (174 aa). In terms of domain architecture, STAS spans 540–666; it reads YPMANKTAGL…MTVGEAVDIY (127 aa).

It belongs to the SLC26A/SulP transporter (TC 2.A.53) family. Expressed in the phloem in roots and in the phloem of vascular bundles in leaves.

It localises to the membrane. Its function is as follows. Low-affinity H(+)/sulfate cotransporter that may be involved in the distribution of sulfate from vascular bundles to the palisade cells of the leaves. Plays a central role in the regulation of sulfate assimilation. The polypeptide is Sulfate transporter 2.2 (SULTR2;2) (Arabidopsis thaliana (Mouse-ear cress)).